The sequence spans 35 residues: Peptide ToHyp2 (35 aa).

Pro residues predominate over residues L1–H29. The interval L1–P35 is disordered. P5, P9, P10, P12, P16, P20, P31, and P35 each carry hydroxyproline.

In terms of processing, O-glycosylated; contains pentose side chains at some or all of the hydroxyproline residues. Glycosylation is required for full antifungal activity.

In terms of biological role, antimicrobial peptide. Inhibits elongation of hyphae in B.sorokiniana (IC(50)=3.8 uM) but has no effect on this process or on germination of conidia in a panel of other phytopathogenic fungi. At concentrations above 10 uM, has antibacterial activity. In Taraxacum officinale (Common dandelion), this protein is Peptide ToHyp2.